Here is a 626-residue protein sequence, read N- to C-terminus: FAD-binding monooxygenase moxY (626 aa).

Residues 1–23 (MAPFLSAHGESASSSSSSSPTPS) are compositionally biased toward low complexity. The segment at 1–47 (MAPFLSAHGESASSSSSSSPTPSRHTRNQHVDYSTPGSTGYNIPQNT) is disordered. Residues 31–47 (VDYSTPGSTGYNIPQNT) show a composition bias toward polar residues. Residues 96–99 (TWLE), 108–109 (DI), and Tyr114 contribute to the FAD site. 106-108 (GCD) lines the NADP(+) pocket. NADP(+)-binding positions include 243 to 249 (SGASSIQ) and 266 to 267 (RT).

This sequence belongs to the FAD-binding monooxygenase family. FAD serves as cofactor.

Its pathway is mycotoxin biosynthesis. Functionally, FAD-binding monooxygenase; part of the fragmented gene cluster that mediates the biosynthesis of dothistromin (DOTH), a polyketide toxin very similar in structure to the aflatoxin precursor, versicolorin B. The first step of the pathway is the conversion of acetate to norsolorinic acid (NOR) and requires the fatty acid synthase subunits hexA and hexB, as well as the polyketide synthase pksA. PksA combines a hexanoyl starter unit and 7 malonyl-CoA extender units to synthesize the precursor NOR. The hexanoyl starter unit is provided to the acyl-carrier protein (ACP) domain by the fungal fatty acid synthase hexA/hexB. The second step is the conversion of NOR to averantin (AVN) and requires the norsolorinic acid ketoreductase nor1, which catalyzes the dehydration of norsolorinic acid to form (1'S)-averantin. The cytochrome P450 monooxygenase avnA then catalyzes the hydroxylation of AVN to 5'hydroxyaverantin (HAVN). The next step is performed by adhA that transforms HAVN to averufin (AVF). Averufin might then be converted to hydroxyversicolorone by cypX and avfA. Hydroxyversicolorone is further converted versiconal hemiacetal acetate (VHA) by moxY. VHA is then the substrate for the versiconal hemiacetal acetate esterase est1 to yield versiconal (VAL). Versicolorin B synthase vbsA then converts VAL to versicolorin B (VERB) by closing the bisfuran ring. Then, the activity of the versicolorin B desaturase verB leads to versicolorin A (VERA). DotB, a predicted chloroperoxidase, may perform epoxidation of the A-ring of VERA. Alternatively, a cytochrome P450, such as cypX or avnA could catalyze this step. It is also possible that another, uncharacterized, cytochrome P450 enzyme is responsible for this step. Opening of the epoxide could potentially be achieved by the epoxide hydrolase epoA. However, epoA seems not to be required for DOTH biosynthesis, but other epoxide hydrolases may have the ability to complement this hydrolysis. Alternatively, opening of the epoxide ring could be achieved non-enzymatically. The next step is the deoxygenation of ring A to yield the 5,8-dihydroxyanthraquinone which is most likely catalyzed by the NADPH dehydrogenase encoded by ver1. The last stages of DOTH biosynthesis are proposed to involve hydroxylation of the bisfuran. OrdB and norB might have oxidative roles here. An alternative possibility is that cytochrome P450 monoogenases such as avnA and cypX might perform these steps in addition to previously proposed steps. In Dothistroma septosporum (Red band needle blight fungus), this protein is FAD-binding monooxygenase moxY.